A 235-amino-acid chain; its full sequence is Peptidase E (235 aa).

Residues S122, D137, and H159 each act as charge relay system in the active site.

Belongs to the peptidase S51 family.

It is found in the cytoplasm. It carries out the reaction Dipeptidase E catalyzes the hydrolysis of dipeptides Asp-|-Xaa. It does not act on peptides with N-terminal Glu, Asn or Gln, nor does it cleave isoaspartyl peptides.. Functionally, hydrolyzes dipeptides containing N-terminal aspartate residues. May play a role in allowing the cell to use peptide aspartate to spare carbon otherwise required for the synthesis of the aspartate family of amino acids. The sequence is that of Peptidase E from Shewanella amazonensis (strain ATCC BAA-1098 / SB2B).